The following is a 157-amino-acid chain: UPF0225 protein PSPTO_4127 (157 aa).

The protein belongs to the UPF0225 family.

The protein is UPF0225 protein PSPTO_4127 of Pseudomonas syringae pv. tomato (strain ATCC BAA-871 / DC3000).